Reading from the N-terminus, the 206-residue chain is Ribosomal RNA small subunit methyltransferase G (206 aa).

S-adenosyl-L-methionine contacts are provided by residues G73, L78, 124–125 (VE), and R139.

It belongs to the methyltransferase superfamily. RNA methyltransferase RsmG family.

The protein localises to the cytoplasm. It catalyses the reaction guanosine(527) in 16S rRNA + S-adenosyl-L-methionine = N(7)-methylguanosine(527) in 16S rRNA + S-adenosyl-L-homocysteine. Functionally, specifically methylates the N7 position of guanine in position 527 of 16S rRNA. The chain is Ribosomal RNA small subunit methyltransferase G from Pectobacterium atrosepticum (strain SCRI 1043 / ATCC BAA-672) (Erwinia carotovora subsp. atroseptica).